The following is a 74-amino-acid chain: Capsid protein VP2 (74 aa).

Its subcellular location is the virion. In terms of biological role, this extremely basic protein may tightly bind to SSV1 DNA. Essential for virus function. In Saccharolobus solfataricus (Sulfolobus solfataricus), this protein is Capsid protein VP2 (VP2).